The sequence spans 1537 residues: DNA excision repair protein ERCC-6-like 2 (1537 aa).

In terms of domain architecture, Helicase ATP-binding spans 134 to 319; sequence YRHYIEGRGC…WCVMDWAVPG (186 aa). 147-154 contacts ATP; sequence DDMGLGKT. A DEAH box motif is present at residues 270-273; the sequence is DEAH. The region spanning 510 to 660 is the Helicase C-terminal domain; it reads VLQQLLNHFR…CVVVGSENAK (151 aa). Disordered regions lie at residues 715 to 735 and 749 to 768; these read KGEP…QEPT and SVGH…TSRT. The segment covering 755–764 has biased composition (basic and acidic residues); sequence GKTDKHKFSD. An Atypical PIP-box motif is present at residues 772 to 783; that stretch reads PAQLTLLQCGFS. Disordered stretches follow at residues 791-811, 833-891, and 918-948; these read KSDQ…DEQP, SEHQ…EDSD, and EDSE…PNLL. The span at 834 to 857 shows a compositional bias: basic and acidic residues; it reads EHQKSDNIQTPDEKCVSDKSEKTL. A phosphoserine mark is found at S968 and S971. The interval 1274 to 1306 is disordered; it reads VHKKEERVRNKSKEKESLLKENPSNDSTLSCYD. Over residues 1276–1292 the composition is skewed to basic and acidic residues; that stretch reads KKEERVRNKSKEKESLL. The span at 1295–1306 shows a compositional bias: polar residues; that stretch reads NPSNDSTLSCYD.

The protein belongs to the SNF2/RAD54 helicase family. Interacts with NEK6. Interacts (via an atypical PIP-box) with PCNA; this interaction facilitates cenrtomeric localization of ERCC6L2. Interacts with CYREN; this interaction is DNA independent. Interacts with XRCC6 and XRCC5. Phosphorylated by NEK6.

The protein localises to the nucleus. The protein resides in the cytoplasm. It is found in the cytoskeleton. It localises to the microtubule organizing center. Its subcellular location is the centrosome. The protein localises to the mitochondrion. The protein resides in the chromosome. It is found in the centromere. Promotes double-strand break (DSB) end-joining and facilitates programmed recombination by controlling how DNA ends are joined in a spatially oriented manner during repair. Also plays a role in DNA repair by restricting DNA end resection in double strand break (DSB) repair. Facilitates replication of complex DNA regions and regulates the maintenance of chromatin structure. This Mus musculus (Mouse) protein is DNA excision repair protein ERCC-6-like 2.